Consider the following 491-residue polypeptide: Cytosolic Fe-S cluster assembly factor NAR1 (491 aa).

Residues Cys-20, Cys-59, Cys-62, Cys-65, Cys-177, Cys-231, Cys-412, and Cys-416 each coordinate [4Fe-4S] cluster.

The protein belongs to the NARF family. As to quaternary structure, interacts with CIA1.

Its subcellular location is the cytoplasm. It localises to the nucleus. Functionally, essential component of a cytosolic Fe/S protein assembly machinery. Required for maturation of extramitochondrial Fe/S proteins. May play a role in the transfer of pre-assembled Fe/S clusters to target apoproteins. This Saccharomyces cerevisiae (strain ATCC 204508 / S288c) (Baker's yeast) protein is Cytosolic Fe-S cluster assembly factor NAR1 (NAR1).